The primary structure comprises 569 residues: MAAARRAAGLLPLLLSSPSRARLPHRQALALTPPLLRPHRLYSHSPKPSSSAAFSAFASASNGAPAGRARELHLYNTKSRRKELFQPRVPGGEVGMYVCGVTPYDDSHIGHARAYVAFDVLYRYLRYLDHKVRYVRNFTDIDDKIIARANQLGEDPFSLSKRYSDDFLSDMANLHCLPPSVEPRVSDHIDQIINMIKQIIDNDCAYAIGGDVYFSVENFPEYGDLSGRKLDDNRAGERVAVDERKKNPADFALWKAAKDGEPSWDSPWGPGRPGWHIECSAMSAHYLGHSFDIHGGGEDLIFPHHENEIAQSRAACCDSSINYWIHNGFVNVNSQKMSKSLGNFVTIRKVTELYHPLALRMFLLGTHYRSPINYTIEQLNVASDRLYYTYQTLQDCEESCQQHQSKAGDPLPVNTTNCIQKLHDEFETSMSDDLHTSVALAAISEPLKVMNDLLHTRKGKKQEKRLESLSAMEEKIRMVLSVLGLLPSSYYEALQQLREKALRRASMTEEQVLQKIEERTSARKAKQYEKSDEIRKELAAVGIALMDGPDGTTWRPSVPLSEQGVVAST.

A chloroplast and mitochondrion-targeting transit peptide spans 1-42; the sequence is MAAARRAAGLLPLLLSSPSRARLPHRQALALTPPLLRPHRLY. Zn(2+) is bound at residue Cys-99. Residues 101-111 carry the 'HIGH' region motif; that stretch reads VTPYDDSHIGH. Positions 279, 304, and 308 each coordinate Zn(2+). The 'KMSKS' region signature appears at 336–340; the sequence is KMSKS. Lys-339 provides a ligand contact to ATP.

It belongs to the class-I aminoacyl-tRNA synthetase family. Requires Zn(2+) as cofactor.

The protein localises to the plastid. The protein resides in the chloroplast. It is found in the mitochondrion. It carries out the reaction tRNA(Cys) + L-cysteine + ATP = L-cysteinyl-tRNA(Cys) + AMP + diphosphate. Functionally, nuclear genome-encoded factor required for normal assembly of chloroplast polysomes. This is Cysteine--tRNA ligase CPS1 homolog, chloroplastic/mitochondrial from Oryza sativa subsp. japonica (Rice).